The sequence spans 88 residues: Early E1B 9 kDa protein (88 aa).

Residues 23–88 are disordered; the sequence is NMEGSQDEDN…DLFPELRRLP (66 aa). The span at 34–44 shows a compositional bias: low complexity; that stretch reads RLLASAASGSS.

This is Early E1B 9 kDa protein from Homo sapiens (Human).